A 519-amino-acid polypeptide reads, in one-letter code: Protein nucleotidyltransferase YdiU (519 aa).

Residues G101, G103, R104, K123, D135, G136, R193, and R200 each contribute to the ATP site. The active-site Proton acceptor is the D271. Residues N272 and D281 each contribute to the Mg(2+) site. D281 lines the ATP pocket.

Belongs to the SELO family. Requires Mg(2+) as cofactor. Mn(2+) is required as a cofactor.

The catalysed reaction is L-seryl-[protein] + ATP = 3-O-(5'-adenylyl)-L-seryl-[protein] + diphosphate. It catalyses the reaction L-threonyl-[protein] + ATP = 3-O-(5'-adenylyl)-L-threonyl-[protein] + diphosphate. The enzyme catalyses L-tyrosyl-[protein] + ATP = O-(5'-adenylyl)-L-tyrosyl-[protein] + diphosphate. It carries out the reaction L-histidyl-[protein] + UTP = N(tele)-(5'-uridylyl)-L-histidyl-[protein] + diphosphate. The catalysed reaction is L-seryl-[protein] + UTP = O-(5'-uridylyl)-L-seryl-[protein] + diphosphate. It catalyses the reaction L-tyrosyl-[protein] + UTP = O-(5'-uridylyl)-L-tyrosyl-[protein] + diphosphate. In terms of biological role, nucleotidyltransferase involved in the post-translational modification of proteins. It can catalyze the addition of adenosine monophosphate (AMP) or uridine monophosphate (UMP) to a protein, resulting in modifications known as AMPylation and UMPylation. The chain is Protein nucleotidyltransferase YdiU from Tolumonas auensis (strain DSM 9187 / NBRC 110442 / TA 4).